We begin with the raw amino-acid sequence, 626 residues long: tRNA uridine 5-carboxymethylaminomethyl modification enzyme MnmG (626 aa).

13–18 contacts FAD; the sequence is GGGHAG. An NAD(+)-binding site is contributed by 273–287; it reads GPRYCPSIEDKIHRF.

The protein belongs to the MnmG family. Homodimer. Heterotetramer of two MnmE and two MnmG subunits. FAD serves as cofactor.

The protein localises to the cytoplasm. Functionally, NAD-binding protein involved in the addition of a carboxymethylaminomethyl (cmnm) group at the wobble position (U34) of certain tRNAs, forming tRNA-cmnm(5)s(2)U34. The polypeptide is tRNA uridine 5-carboxymethylaminomethyl modification enzyme MnmG (Acinetobacter baumannii (strain ACICU)).